Consider the following 946-residue polypeptide: Bifunctional glutamine synthetase adenylyltransferase/adenylyl-removing enzyme (946 aa).

The tract at residues 1 to 440 (MKPLSSPLQQ…VFNELIGDDE (440 aa)) is adenylyl removase. Residues 449–946 (SEQWRELWQD…VSWQKWLVEE (498 aa)) form an adenylyl transferase region.

It belongs to the GlnE family. Mg(2+) is required as a cofactor.

It carries out the reaction [glutamine synthetase]-O(4)-(5'-adenylyl)-L-tyrosine + phosphate = [glutamine synthetase]-L-tyrosine + ADP. The catalysed reaction is [glutamine synthetase]-L-tyrosine + ATP = [glutamine synthetase]-O(4)-(5'-adenylyl)-L-tyrosine + diphosphate. Functionally, involved in the regulation of glutamine synthetase GlnA, a key enzyme in the process to assimilate ammonia. When cellular nitrogen levels are high, the C-terminal adenylyl transferase (AT) inactivates GlnA by covalent transfer of an adenylyl group from ATP to specific tyrosine residue of GlnA, thus reducing its activity. Conversely, when nitrogen levels are low, the N-terminal adenylyl removase (AR) activates GlnA by removing the adenylyl group by phosphorolysis, increasing its activity. The regulatory region of GlnE binds the signal transduction protein PII (GlnB) which indicates the nitrogen status of the cell. This chain is Bifunctional glutamine synthetase adenylyltransferase/adenylyl-removing enzyme, found in Escherichia coli (strain SMS-3-5 / SECEC).